The primary structure comprises 246 residues: Probable transcriptional regulatory protein YebC (246 aa).

Positions 1 to 20 (MAGHSKWANTRHRKAAQDAK) are disordered.

This sequence belongs to the TACO1 family.

Its subcellular location is the cytoplasm. In Shigella flexneri, this protein is Probable transcriptional regulatory protein YebC.